Reading from the N-terminus, the 602-residue chain is Elongation factor 4 (602 aa).

One can recognise a tr-type G domain in the interval 2–184; the sequence is NHIRNFSIIA…QIVAKVPAPR (183 aa). GTP-binding positions include 14–19 and 131–134; these read DHGKST and NKMD.

This sequence belongs to the TRAFAC class translation factor GTPase superfamily. Classic translation factor GTPase family. LepA subfamily.

Its subcellular location is the cell inner membrane. It carries out the reaction GTP + H2O = GDP + phosphate + H(+). Functionally, required for accurate and efficient protein synthesis under certain stress conditions. May act as a fidelity factor of the translation reaction, by catalyzing a one-codon backward translocation of tRNAs on improperly translocated ribosomes. Back-translocation proceeds from a post-translocation (POST) complex to a pre-translocation (PRE) complex, thus giving elongation factor G a second chance to translocate the tRNAs correctly. Binds to ribosomes in a GTP-dependent manner. The protein is Elongation factor 4 of Acidovorax ebreus (strain TPSY) (Diaphorobacter sp. (strain TPSY)).